A 157-amino-acid chain; its full sequence is Phosphopantetheine adenylyltransferase (157 aa).

Thr10 contributes to the substrate binding site. Residues 10–11 (TF) and His18 each bind ATP. Lys42, Leu74, and Arg88 together coordinate substrate. ATP is bound by residues 89-91 (GLR), Glu99, and 124-130 (NAFISSS).

The protein belongs to the bacterial CoaD family. Homohexamer. Mg(2+) serves as cofactor.

The protein localises to the cytoplasm. The enzyme catalyses (R)-4'-phosphopantetheine + ATP + H(+) = 3'-dephospho-CoA + diphosphate. Its pathway is cofactor biosynthesis; coenzyme A biosynthesis; CoA from (R)-pantothenate: step 4/5. Its activity is regulated as follows. Tightly binds to CoA, which is presumably a feedback inhibitor. Potently inhibited by D-amethopterin, which simultaneously occupies the 4'-phosphopantetheine- and ATP-binding sites; following treatment with D-amethopterin, H.pylori exhibits morphological characteristics associated with cell death, showing that D-amethopterin displays antimicrobial activity. Reversibly transfers an adenylyl group from ATP to 4'-phosphopantetheine, yielding dephospho-CoA (dPCoA) and pyrophosphate. The polypeptide is Phosphopantetheine adenylyltransferase (Helicobacter pylori (strain ATCC 700392 / 26695) (Campylobacter pylori)).